The primary structure comprises 617 residues: Chaperone protein HscA homolog (617 aa).

It belongs to the heat shock protein 70 family.

Its function is as follows. Probable chaperone. Has a low intrinsic ATPase activity which is markedly stimulated by HscB. This Vibrio parahaemolyticus serotype O3:K6 (strain RIMD 2210633) protein is Chaperone protein HscA homolog.